A 585-amino-acid polypeptide reads, in one-letter code: NADP-reducing hydrogenase subunit HndD (585 aa).

Residues 2 to 85 (SMLTITIDGK…NMVVKTNSLR (84 aa)) form the 2Fe-2S ferredoxin-type domain. Cysteine 36, cysteine 52, cysteine 55, and cysteine 69 together coordinate [2Fe-2S] cluster. The region spanning 85 to 124 (RVLNARRTVLELLLSDHPKDCLVCAKSGECELQTLAERFG) is the 4Fe-4S His(Cys)3-ligated-type domain. [4Fe-4S] cluster-binding residues include histidine 101, cysteine 105, cysteine 108, and cysteine 114. 4Fe-4S ferredoxin-type domains lie at 144-174 (ASII…VLSG) and 185-216 (PAFE…EHEY).

As to quaternary structure, heterotetramer composed of HndA, HndB, HndC and HndD subunits. HndD is probably the hydrogenase subunit. It depends on [4Fe-4S] cluster as a cofactor.

It catalyses the reaction H2 + NADP(+) = NADPH + H(+). Inhibited by oxygen. Functionally, catalyzes the reduction of NADP in the presence of molecular H(2) to yield NADPH. This Solidesulfovibrio fructosivorans (Desulfovibrio fructosivorans) protein is NADP-reducing hydrogenase subunit HndD (hndD).